Here is a 113-residue protein sequence, read N- to C-terminus: Probable 4-amino-4-deoxy-L-arabinose-phosphoundecaprenol flippase subunit ArnE (113 aa).

The next 3 helical transmembrane spans lie at 37–57 (SALK…LFWL), 62–82 (ILPL…VTLA), and 91–111 (AGIK…LMSL). Residues 45–111 (AVILLAVGML…IMLGILLMSL (67 aa)) enclose the EamA domain.

Belongs to the ArnE family. As to quaternary structure, heterodimer of ArnE and ArnF.

The protein resides in the cell inner membrane. It participates in bacterial outer membrane biogenesis; lipopolysaccharide biosynthesis. In terms of biological role, translocates 4-amino-4-deoxy-L-arabinose-phosphoundecaprenol (alpha-L-Ara4N-phosphoundecaprenol) from the cytoplasmic to the periplasmic side of the inner membrane. In Photorhabdus laumondii subsp. laumondii (strain DSM 15139 / CIP 105565 / TT01) (Photorhabdus luminescens subsp. laumondii), this protein is Probable 4-amino-4-deoxy-L-arabinose-phosphoundecaprenol flippase subunit ArnE.